Reading from the N-terminus, the 105-residue chain is Large ribosomal subunit protein uL24 (105 aa).

The protein belongs to the universal ribosomal protein uL24 family. As to quaternary structure, part of the 50S ribosomal subunit.

One of two assembly initiator proteins, it binds directly to the 5'-end of the 23S rRNA, where it nucleates assembly of the 50S subunit. Functionally, one of the proteins that surrounds the polypeptide exit tunnel on the outside of the subunit. This Wolbachia pipientis wMel protein is Large ribosomal subunit protein uL24.